Here is a 173-residue protein sequence, read N- to C-terminus: Archaemetzincin (173 aa).

A Zn(2+)-binding site is contributed by H130. The Proton acceptor role is filled by E131. Residues H134, H140, C141, C146, C165, and C168 each contribute to the Zn(2+) site.

It belongs to the peptidase M54 family. Monomer. The cofactor is Zn(2+).

Probable zinc metalloprotease whose natural substrate is unknown. This chain is Archaemetzincin, found in Halobacterium salinarum (strain ATCC 29341 / DSM 671 / R1).